Consider the following 231-residue polypeptide: DNA damage response protein C (231 aa).

In terms of assembly, homodimer.

Its subcellular location is the cytoplasm. It localises to the nucleoid. Appears to contribute to D.radiodurans capacity to survive exposure to ionizing radiation. Likely functions as a DNA damage-induced nucleoid-associated protein (NAP) that contributes to the enhanced level of nucleoid compaction after irradiation by bridging DNA duplexes, thereby limiting the dispersion of the fragmented genome immediately after irradiation to facilitate subsequent DNA repair. In vitro, binds both ssDNA and dsDNA, and is able to compact circular DNA, circularize linear DNA, anneal complementary DNA strands and protect DNA from nucleases. The chain is DNA damage response protein C from Deinococcus radiodurans (strain ATCC 13939 / DSM 20539 / JCM 16871 / CCUG 27074 / LMG 4051 / NBRC 15346 / NCIMB 9279 / VKM B-1422 / R1).